The sequence spans 1885 residues: MAFSYRTPQEELLSRLPQSQQEAISGFQYERFQKEEEKKVENFSFYLPEKTREWFTKSGVYLSPFAYVNHSHPGCKTLENHLLFNVVASYISKYSYVACLSIKSNKMSKMERLGSNSVKTYDILNRLVTAKDKARYGPLARPERSPCPKKTNIFIHDEIHYWSRDQLETFLQVHRPKNLWATLVFPPEILAGYKSSVLPFLYQFEIHGKDLVYMPDGVRSESYTQPLENGFLLSSSSILVRNKATGVEIRYQVSLVYSLGSHHLFHIYPTEDLMKEEVRRFGPYDLFDVGSLFVKPVRVPIQDFPLSVFKKIFIYLSSLKKPDVQSAVAKLRQLSDADISIESVFMVQEFASRVEKNGVGSWSCSFWECMKDWFFDKLPYREVLEKIGLANDFTRRLMKIKPLAFDIHTTDRPLTVRMVIDQIWGERQSSCDDVPNIIFYGRKEWLEHGLLPKVKKGLAKLVPGRETGGSDYPEEIYSDLLSSTSIWRSYDENLRHRKASPIVILKSEKAYSEAPGFSSNCISLCSTPFGEVIERTPFEVERERKKRELSFGCLDFHIRKMKVKDASELSIKLDEQNKEGLRRQKRKEKAKKTRMIPVHLLELGSDQKEKNLGQEASKGKGIEQEERRKSDEAKFDSGPSGVCSIKAENPVDAQHIAEPVPCLKLNDLIGKEKICSSGLIKTVGNDYLTLARQIEDMPLAQLKNRKAAYFCIDYPMVYFHDKISYPTFEATGEIKQIIMRARDKWGANFNSALIQVYNDGCRLPLHSDNEECYDDDEILTINVVGDAKFHTTCHGEIIDLRQGDEILMPGGYQKMNKHAVEVASEGRTSVTLRVHKRDFSFESKLRFIKGKFDCLFVSIAEIIHKKPEEVMMFIPHIVDRCVSNRGCSLDDARAICEKYEIKIECEGDCGLVECGTIGLSVGRMLLRGNHFTVASVRRSSMDSLANSSKELKSNGVLDHVMFNFHKRLRSVEPDLTVEEIKVDSSRAGKLLKSLMDGMTGIVSHNSTHEGWRMIKGINSTSEMRSFMSMIKGKSEETRGDLFDRVQELNFMKVKIYGIFGFAGSGKSHAIQNLIQTEFKGSQGVMVICPRRFLAKDWSEKGVDEKDIKTFESALKSDVKGKRLFILDEISLLPKGFTDLLMLKMHMEGILKKSTIVCIGDPLQAGYFCPKDDNYLSREGEIKRLFKDGVNYKWYSYRINKFIAKKLAIETMNDFIGIDEQNLIYKDMPSAHHFMENKGNHIEVILVPSMIEKELYSNYGNVMTFGESQGLTFNCGVIVLSEEAKLCSDAHIMVAITRFRRGFCFALGSKGSKEDYMRSMKSGLLQRMCSGIGASKEFILGSSSVKLILSEKDVSKGAGVDEMDREARLEGDVWLKSMIYLGKRYHIVEPLGQVIKLTENAIKCHIPVCSSQTLGPELDNIQAREFREFKGKNGWSNQFREEAGPNWKHPYRVNQAMSYEAIYPRHRMDDDLTFLAAIKKRLRFDNVANNYAKFKAAESRGKYLAKVFLRHVPIKCGRDQRLLDQCRQEFEETKLSKSAATIGAHSQRSDSDWPLDKIFLFMKSQLCTKFEKRFTEAKAGQTLACFPHKILVEFSPWCRYTEKVLTANLPDNYYIHQRKNFSELEDFAKRFSNGSMCVESDYTAFDVSQDHTILAFEVELLKHFGWDDKVLQSYIKMKCTLGCRLGGFAIMRFTGEFSTFLFNTLANMVFTFCRYEVPDGTPICFAGDDMCALRNLREIDTHECILSKLSLKAKVNRTKVPMFCGWRLCFDGLIKEPCLIYERLQVAIENGRLMDVIDSYFLEFSFAYKLGERLYSHLEIEQLNYHQVLTRFFIRNKHLLRGDSRHNISELEWLSDEDSDDDKGSQIEDRRRGYSNCWGEKLQNLF.

Residues 63-239 form the Alphavirus-like MT domain; it reads SPFAYVNHSH…GFLLSSSSIL (177 aa). Residues 607-635 show a composition bias toward basic and acidic residues; that stretch reads QKEKNLGQEASKGKGIEQEERRKSDEAKF. A disordered region spans residues 607-639; it reads QKEKNLGQEASKGKGIEQEERRKSDEAKFDSGP. The Fe2OG dioxygenase domain maps to 748–836; the sequence is NFNSALIQVY…RTSVTLRVHK (89 aa). In terms of domain architecture, (+)RNA virus helicase ATP-binding spans 1027–1192; it reads MSMIKGKSEE…RLFKDGVNYK (166 aa). 1060-1067 lines the ATP pocket; sequence GFAGSGKS. A (+)RNA virus helicase C-terminal domain is found at 1193–1337; that stretch reads WYSYRINKFI…CSGIGASKEF (145 aa). Residues 1634-1741 enclose the RdRp catalytic domain; the sequence is SMCVESDYTA…LRNLREIDTH (108 aa).

It catalyses the reaction RNA(n) + a ribonucleoside 5'-triphosphate = RNA(n+1) + diphosphate. Functionally, involved in viral RNA replication. The polypeptide is RNA-directed RNA polymerase (Crataegus (hawthorn)).